The sequence spans 649 residues: tRNA-guanine(15) transglycosylase (649 aa).

Asp-88 acts as the Nucleophile in catalysis. Substrate-binding residues include Asp-123 and Ala-194. Residues Cys-280, Cys-282, and Cys-285 each contribute to the Zn(2+) site. Residues 573–648 (KYRIVIDSSV…VAVTLRGGLK (76 aa)) enclose the PUA domain.

It belongs to the archaeosine tRNA-ribosyltransferase family. Zn(2+) serves as cofactor.

It carries out the reaction guanosine(15) in tRNA + 7-cyano-7-deazaguanine = 7-cyano-7-carbaguanosine(15) in tRNA + guanine. The protein operates within tRNA modification; archaeosine-tRNA biosynthesis. Exchanges the guanine residue with 7-cyano-7-deazaguanine (preQ0) at position 15 in the dihydrouridine loop (D-loop) of archaeal tRNAs. This is tRNA-guanine(15) transglycosylase from Methanococcus maripaludis (strain C7 / ATCC BAA-1331).